The sequence spans 311 residues: Methionyl-tRNA formyltransferase (311 aa).

(6S)-5,6,7,8-tetrahydrofolate is bound at residue 109–112; sequence SLLP.

Belongs to the Fmt family.

The enzyme catalyses L-methionyl-tRNA(fMet) + (6R)-10-formyltetrahydrofolate = N-formyl-L-methionyl-tRNA(fMet) + (6S)-5,6,7,8-tetrahydrofolate + H(+). Its function is as follows. Attaches a formyl group to the free amino group of methionyl-tRNA(fMet). The formyl group appears to play a dual role in the initiator identity of N-formylmethionyl-tRNA by promoting its recognition by IF2 and preventing the misappropriation of this tRNA by the elongation apparatus. The protein is Methionyl-tRNA formyltransferase of Staphylococcus aureus (strain MW2).